The primary structure comprises 1925 residues: Methylcytosine dioxygenase tet3-A (1925 aa).

The CXXC-type zinc finger occupies 62-103; the sequence is SNKKRKRCGVCVPCLRKEPCGACYNCVNRSTSHQICKMRKCE. Zn(2+)-binding residues include cysteine 69, cysteine 72, cysteine 75, cysteine 81, cysteine 84, cysteine 87, cysteine 97, and cysteine 102. 4 disordered regions span residues 457–476, 630–685, 774–812, and 833–892; these read KNAL…QNKK, KSQK…NAVF, GAKD…QNDL, and DFSL…PISH. Over residues 465-476 the composition is skewed to polar residues; that stretch reads SPRQTSWEQNKK. Basic residues predominate over residues 665–677; it reads KPPRKQVQIKKPR. Positions 777–797 are enriched in low complexity; it reads DSCPTPSTDDASSSSGQGDSA. 2 stretches are compositionally biased toward polar residues: residues 841–856 and 883–892; these read APSQ…QISG and PALSNNPISH. 5 residues coordinate Zn(2+): cysteine 982, cysteine 984, cysteine 1042, histidine 1068, and cysteine 1070. Arginine 1110 contacts 2-oxoglutarate. Positions 1120, 1122, 1138, 1147, and 1207 each coordinate Zn(2+). A 2-oxoglutarate-binding site is contributed by cysteine 1223. Histidine 1229 contacts Zn(2+). Histidine 1231 and aspartate 1233 together coordinate Fe cation. Histidine 1265 serves as a coordination point for 2-oxoglutarate. Disordered stretches follow at residues 1307 to 1364, 1474 to 1513, 1556 to 1600, and 1722 to 1769; these read SEPA…QTKP, LADG…KSFN, SVHS…LPND, and NWAS…EEEI. Positions 1316-1347 are enriched in basic and acidic residues; sequence RQLDAKKAAAEKKKLQKEKLVSPDKTKQEPAD. Residues 1350–1363 are compositionally biased toward polar residues; the sequence is MCQQNPGVPQQQTK. The span at 1490-1499 shows a compositional bias: basic and acidic residues; the sequence is SYRRSSEVPH. Polar residues-rich tracts occupy residues 1502–1513, 1556–1572, and 1730–1742; these read SLQNPNSQKSFN, SVHS…QTSD, and VGNS…SQNH. Histidine 1804 serves as a coordination point for Fe cation. 1819 to 1821 contacts 2-oxoglutarate; sequence RIS. A coiled-coil region spans residues 1837–1870; the sequence is LALWEAKMKLLAERARVKEEEAARLGIKQEVKSL.

It belongs to the TET family. The cofactor is Fe(2+). Zn(2+) serves as cofactor. In terms of tissue distribution, detected in embryo (at protein level). Detected in embryonic head, in developing brain, neural tube and eye.

The protein resides in the nucleus. The protein localises to the chromosome. It carries out the reaction a 5-methyl-2'-deoxycytidine in DNA + 2-oxoglutarate + O2 = a 5-hydroxymethyl-2'-deoxycytidine in DNA + succinate + CO2. The enzyme catalyses a 5-hydroxymethyl-2'-deoxycytidine in DNA + 2-oxoglutarate + O2 = a 5-formyl-2'-deoxycytidine in DNA + succinate + CO2 + H2O. It catalyses the reaction a 5-formyl-2'-deoxycytidine in DNA + 2-oxoglutarate + O2 = a 5-carboxyl-2'-deoxycytidine in DNA + succinate + CO2 + H(+). In terms of biological role, dioxygenase that catalyzes the conversion of the modified genomic base 5-methylcytosine (5mC) into 5-hydroxymethylcytosine (5hmC) and plays a key role in epigenetic chromatin reprogramming during embryonic development. Conversion of 5mC into 5hmC probably constitutes the first step in cytosine demethylation. Selectively binds to the promoter region of target genes and contributes to regulate the expression of numerous developmental genes, including pax6, rax, sox9 and six3. May also contribute to the regulation of target genes in ways that do not require its enzyme activity. This is Methylcytosine dioxygenase tet3-A from Xenopus laevis (African clawed frog).